We begin with the raw amino-acid sequence, 72 residues long: MAIKRGTLVRAIREKLQGSLEAQASDPLIPNYVFETPGEVVDIKDDYLQIKFGAVPTPPIWLRADQVEEIAS.

It belongs to the complex I NdhO subunit family. NDH-1 can be composed of about 15 different subunits; different subcomplexes with different compositions have been identified which probably have different functions.

The protein localises to the cellular thylakoid membrane. The catalysed reaction is a plastoquinone + NADH + (n+1) H(+)(in) = a plastoquinol + NAD(+) + n H(+)(out). It catalyses the reaction a plastoquinone + NADPH + (n+1) H(+)(in) = a plastoquinol + NADP(+) + n H(+)(out). Functionally, NDH-1 shuttles electrons from an unknown electron donor, via FMN and iron-sulfur (Fe-S) centers, to quinones in the respiratory and/or the photosynthetic chain. The immediate electron acceptor for the enzyme in this species is believed to be plastoquinone. Couples the redox reaction to proton translocation, and thus conserves the redox energy in a proton gradient. Cyanobacterial NDH-1 also plays a role in inorganic carbon-concentration. The sequence is that of NAD(P)H-quinone oxidoreductase subunit O from Synechococcus sp. (strain JA-3-3Ab) (Cyanobacteria bacterium Yellowstone A-Prime).